The following is a 191-amino-acid chain: Peptide methionine sulfoxide reductase (191 aa).

2 disordered regions span residues 1-20 and 168-191; these read MASSTTNNPALDLDSDTPEN and EKGGGNGNKQSAQKGCNDPIKCYG.

The protein belongs to the MsrA Met sulfoxide reductase family.

The catalysed reaction is L-methionyl-[protein] + [thioredoxin]-disulfide + H2O = L-methionyl-(S)-S-oxide-[protein] + [thioredoxin]-dithiol. It carries out the reaction [thioredoxin]-disulfide + L-methionine + H2O = L-methionine (S)-S-oxide + [thioredoxin]-dithiol. Functionally, has an important function as a repair enzyme for proteins that have been inactivated by oxidation. Catalyzes the reversible oxidation-reduction of methionine sulfoxide in proteins to methionine. In Fragaria ananassa (Strawberry), this protein is Peptide methionine sulfoxide reductase.